A 292-amino-acid chain; its full sequence is E3 ubiquitin-protein ligase trim-21 (292 aa).

The RING-type zinc finger occupies 6 to 52 (CEICDDDFSSEEDGDHNPRNLKCSHTLCEGCIKKLLKNGRVVCPFCR). The B box-type zinc-finger motif lies at 90-137 (NFPPKCVEHPYNVAEFACIESNCSSKNKLMCQTCEEFGAHKGHAKELL). The Zn(2+) site is built by C95, H98, C123, and H129. A coiled-coil region spans residues 152–179 (INQLKLNIQNCTVKKNELEEAVVKSEQL).

Belongs to the TRIM/RBCC family. In terms of assembly, interacts with E2 ubiquitin-conjugating enzyme ubc-21. Interacts with ced-6; this mediates interaction of trim-21 with ced-1 and is required for ced-1 ubiquitination. Interacts with nck-1; the interaction is required for ced-1 ubiquitination. As to expression, in early larva, observed mainly in pharyngeal and body wall muscle cells.

The protein localises to the cytoplasm. It catalyses the reaction S-ubiquitinyl-[E2 ubiquitin-conjugating enzyme]-L-cysteine + [acceptor protein]-L-lysine = [E2 ubiquitin-conjugating enzyme]-L-cysteine + N(6)-ubiquitinyl-[acceptor protein]-L-lysine.. The protein operates within protein modification; protein ubiquitination. Functionally, E3 ubiquitin-protein ligase which catalyzes 'Lys-48'-linked polyubiquitination of ced-1, promoting its proteasomal degradation to maintain appropriate ced-1 levels for apoptotic cell clearance. Acts together with E2 ubiquitin-conjugating enzyme ubc-21. The chain is E3 ubiquitin-protein ligase trim-21 from Caenorhabditis elegans.